A 221-amino-acid chain; its full sequence is DNA mismatch repair protein MutH (221 aa).

It belongs to the MutH family.

Its subcellular location is the cytoplasm. Its function is as follows. Sequence-specific endonuclease that cleaves unmethylated GATC sequences. It is involved in DNA mismatch repair. This chain is DNA mismatch repair protein MutH, found in Vibrio cholerae serotype O1 (strain ATCC 39315 / El Tor Inaba N16961).